Consider the following 564-residue polypeptide: Eukaryotic translation initiation factor 3 subunit L (564 aa).

Ser2 carries the N-acetylserine modification. The 207-residue stretch at 331–537 (DAIRVFANIL…IHIADTKVAR (207 aa)) folds into the PCI domain. N6-acetyllysine is present on residues Lys465 and Lys549.

This sequence belongs to the eIF-3 subunit L family. In terms of assembly, component of the eukaryotic translation initiation factor 3 (eIF-3) complex, which is composed of 13 subunits: EIF3A, EIF3B, EIF3C, EIF3D, EIF3E, EIF3F, EIF3G, EIF3H, EIF3I, EIF3J, EIF3K, EIF3L and EIF3M. The eIF-3 complex appears to include 3 stable modules: module A is composed of EIF3A, EIF3B, EIF3G and EIF3I; module B is composed of EIF3F, EIF3H, and EIF3M; and module C is composed of EIF3C, EIF3D, EIF3E, EIF3K and EIF3L. EIF3C of module C binds EIF3B of module A and EIF3H of module B, thereby linking the three modules. EIF3J is a labile subunit that binds to the eIF-3 complex via EIF3B. The eIF-3 complex interacts with RPS6KB1 under conditions of nutrient depletion. Mitogenic stimulation leads to binding and activation of a complex composed of MTOR and RPTOR, leading to phosphorylation and release of RPS6KB1 and binding of EIF4B to eIF-3. Interacts with RRN3.

The protein resides in the cytoplasm. Component of the eukaryotic translation initiation factor 3 (eIF-3) complex, which is required for several steps in the initiation of protein synthesis. The eIF-3 complex associates with the 40S ribosome and facilitates the recruitment of eIF-1, eIF-1A, eIF-2:GTP:methionyl-tRNAi and eIF-5 to form the 43S pre-initiation complex (43S PIC). The eIF-3 complex stimulates mRNA recruitment to the 43S PIC and scanning of the mRNA for AUG recognition. The eIF-3 complex is also required for disassembly and recycling of post-termination ribosomal complexes and subsequently prevents premature joining of the 40S and 60S ribosomal subunits prior to initiation. The eIF-3 complex specifically targets and initiates translation of a subset of mRNAs involved in cell proliferation, including cell cycling, differentiation and apoptosis, and uses different modes of RNA stem-loop binding to exert either translational activation or repression. The protein is Eukaryotic translation initiation factor 3 subunit L of Bos taurus (Bovine).